We begin with the raw amino-acid sequence, 188 residues long: MHYTATVLLAFGMSMDAFAASIGKGATLHKPKFSEALRTGLIFGAVETLTPLIGWGLGILASKFVLEWNHWIAFVLLIFLGGRMIIEGIRGGSDEDETPLRRHSFWLLVTTAIATSLDAMAVGVGLAFLQVNIIATALAIGCATLIMSTLGMMIGRFIGPMLGKRAEILGGVVLIGIGVQILWTHFHG.

6 helical membrane passes run 3–23 (YTATVLLAFGMSMDAFAASIG), 41–61 (LIFGAVETLTPLIGWGLGILA), 66–86 (LEWNHWIAFVLLIFLGGRMII), 106–128 (WLLVTTAIATSLDAMAVGVGLAF), 143–163 (ATLIMSTLGMMIGRFIGPMLG), and 168–188 (ILGGVVLIGIGVQILWTHFHG).

This sequence belongs to the MntP (TC 9.B.29) family.

It is found in the cell inner membrane. Functionally, probably functions as a manganese efflux pump. This Salmonella heidelberg (strain SL476) protein is Probable manganese efflux pump MntP.